We begin with the raw amino-acid sequence, 459 residues long: Chromosomal replication initiator protein DnaA (459 aa).

The domain I, interacts with DnaA modulators stretch occupies residues 1-73 (MEIPIESLWS…AHAVQDILGH (73 aa)). Residues 73–117 (HPVGIYITVAQGDEVSHFSEREVSWESTNPSSIPESLPHHNHKTT) are domain II. The domain III, AAA+ region stretch occupies residues 118-334 (ELNSKYVFSR…GALIRAVAYI (217 aa)). The ATP site is built by glycine 162, glycine 164, lysine 165, and threonine 166. The segment at 335–459 (SIWGLPMTVE…INMTSRSQKS (125 aa)) is domain IV, binds dsDNA.

The protein belongs to the DnaA family. As to quaternary structure, oligomerizes as a right-handed, spiral filament on DNA at oriC.

The protein resides in the cytoplasm. Plays an essential role in the initiation and regulation of chromosomal replication. ATP-DnaA binds to the origin of replication (oriC) to initiate formation of the DNA replication initiation complex once per cell cycle. Binds the DnaA box (a 9 base pair repeat at the origin) and separates the double-stranded (ds)DNA. Forms a right-handed helical filament on oriC DNA; dsDNA binds to the exterior of the filament while single-stranded (ss)DNA is stabiized in the filament's interior. The ATP-DnaA-oriC complex binds and stabilizes one strand of the AT-rich DNA unwinding element (DUE), permitting loading of DNA polymerase. After initiation quickly degrades to an ADP-DnaA complex that is not apt for DNA replication. Binds acidic phospholipids. In Nostoc punctiforme (strain ATCC 29133 / PCC 73102), this protein is Chromosomal replication initiator protein DnaA.